The sequence spans 82 residues: Small ribosomal subunit protein uS17 (82 aa).

It belongs to the universal ribosomal protein uS17 family. In terms of assembly, part of the 30S ribosomal subunit.

One of the primary rRNA binding proteins, it binds specifically to the 5'-end of 16S ribosomal RNA. In Shewanella sp. (strain MR-7), this protein is Small ribosomal subunit protein uS17.